The sequence spans 168 residues: Disulfide bond formation protein B (168 aa).

Over 1–11 (MSNPMRPVRSI) the chain is Cytoplasmic. A helical transmembrane segment spans residues 12–28 (LLAIFTGCAGLIGYALY). At 29–46 (LQLVENLLPCPLCVVQRM) the chain is on the periplasmic side. Cysteine 38 and cysteine 41 are oxidised to a cystine. Residues 47–63 (AYWLIGLTALAGFFHTP) form a helical membrane-spanning segment. Residues 64–69 (ETTGRR) are Cytoplasmic-facing. The chain crosses the membrane as a helical span at residues 70–87 (IYAGLMAVFAFTGGLVAL). At 88–143 (RQAWLVRYPEAFECGISPEEAFLNALPLARWWPVMFEANGDCADVTWKFASLTLPD) the chain is on the periplasmic side. A disulfide bond links cysteine 101 and cysteine 129. A helical membrane pass occupies residues 144–162 (WSAIFFMILAALSIYVLLV). Topologically, residues 163-168 (RENQRE) are cytoplasmic.

Belongs to the DsbB family.

The protein resides in the cell inner membrane. Functionally, required for disulfide bond formation in some periplasmic proteins. Acts by oxidizing the DsbA protein. This chain is Disulfide bond formation protein B, found in Nitrosospira multiformis (strain ATCC 25196 / NCIMB 11849 / C 71).